The following is a 1759-amino-acid chain: Collagen alpha-1(IV) chain (1759 aa).

Residues 1 to 20 (MSRLSLLGLTAAVVLLSSFC) form the signal peptide. Residues 21-194 (QDRIHVDAAA…PGNSGYPGLK (174 aa)) constitute a propeptide, N-terminal propeptide (7S domain). 6 disordered regions span residues 51–245 (PGFG…GSYP), 269–415 (KGRD…GIDG), 548–596 (AGDP…PGLP), 618–650 (PAGIPGLKGDHGLPGLPGRPGSDGLPGYPGGPG), 666–720 (IDGK…RGIP), and 787–1522 (RGQQ…GTPG). 3 stretches are compositionally biased toward low complexity: residues 104-116 (HPGLQGLDGLPGL), 140-153 (PPGQSGQNGNPGRP), and 278-293 (PGMLGLDGPPGYPGLK). The segment at 195–1530 (GAKGDPGPYG…PGYPGSPGGW (1336 aa)) is triple-helical region. Gly residues-rich tracts occupy residues 324–345 (GEQGLGGTPGYPGTKGGAGEPG), 360–370 (GPLGEGTGEAG), and 379–388 (GVQGGKGLPG). Low complexity-rich tracts occupy residues 399–411 (RGPVGAPGAPGQP) and 574–595 (MPGAPGKPGSAGSDGLSGSPGL). Residues 833–848 (YPGPNGDAGAAGLPGP) are compositionally biased toward low complexity. The segment covering 904-913 (GQDGGPGYSG) has biased composition (gly residues). Composition is skewed to low complexity over residues 1037–1047 (YPGQPGDVGYP), 1219–1232 (ENGDNGNQGRDGQP), 1247–1271 (PGRDGQPGPVGPPGDDGYPGAPGQD), and 1281–1309 (QDGYPGLDGLPGAPGLNGEPGSPGQYGMP). A compositionally biased stretch (gly residues) spans 1310–1319 (GLPGGPGESG). The segment covering 1341–1357 (LPGAPGVPGVEGVPGLE) has biased composition (low complexity). Over residues 1410–1422 (PRGDDGFPGRDGL) the composition is skewed to basic and acidic residues. Low complexity-rich tracts occupy residues 1423 to 1437 (DGLPGRPGREGLPGP) and 1472 to 1482 (PPGKAGYPGAP). The span at 1495–1504 (GMPGHGGDQG) shows a compositional bias: gly residues. The Collagen IV NC1 domain occupies 1535-1759 (GFTFAKHSQT…SRCQVCLKNR (225 aa)). 6 cysteine pairs are disulfide-bonded: Cys1550-Cys1641, Cys1583-Cys1638, Cys1595-Cys1601, Cys1660-Cys1755, Cys1694-Cys1752, and Cys1706-Cys1712. Met1623 is covalently cross-linked (S-Lysyl-methionine sulfilimine (Met-Lys) (interchain with K-1741)). An S-Lysyl-methionine sulfilimine (Lys-Met) (interchain with M-1623) cross-link involves residue Lys1741.

Belongs to the type IV collagen family. In terms of assembly, trimers of two alpha 1(IV) and one alpha 2(IV) chain. Type IV collagen forms a mesh-like network linked through intermolecular interactions between 7S domains and between NC1 domains. Post-translationally, prolines at the third position of the tripeptide repeating unit (G-X-Y) are hydroxylated in some or all of the chains. In terms of processing, type IV collagens contain numerous cysteine residues which are involved in inter- and intramolecular disulfide bonding. 12 of these, located in the NC1 domain, are conserved in all known type IV collagens. The trimeric structure of the NC1 domains is stabilized by covalent bonds between Lys and Met residues.

It localises to the secreted. Its subcellular location is the extracellular space. The protein localises to the extracellular matrix. The protein resides in the basement membrane. Collagen type IV is specific for basement membranes. Required to restrict presynaptic growth at the neuromuscular junctions (NMJ) in late larval stage and in adult motor neurons. May play a role in axon regeneration in embryos following injury in D-type motor neurons. The protein is Collagen alpha-1(IV) chain of Caenorhabditis elegans.